The following is a 101-amino-acid chain: MAKIISSELPDLILSSVITDKTIKLLETKNYTFLAPKEVSKIAFKRAIEDMFKVKVNSINSLNLPNKKKRVGRYKTGSLPLYKKMIVKLDSKDTIDLFLDR.

Belongs to the universal ribosomal protein uL23 family. Part of the 50S ribosomal subunit.

The protein resides in the plastid. It localises to the chloroplast. Binds to 23S rRNA. This Cyanidium caldarium (Red alga) protein is Large ribosomal subunit protein uL23c (rpl23).